Reading from the N-terminus, the 506-residue chain is MTILCWLALLSTLTAVNAANILAVFPTPAYSHHIVYKVYIEALAEKCHNVTVVKPKLFAYSTKTYCGNITEINADMSVEQYKKLVANSAMFRKRGVVSDTDTVTAANYLGLIEMFKDQFDNINVRNLIANNQTFDLVVVEAFADYALVFGHLYDPAPVIQIAPGYGLAENFDTVGAVARHPVHHPNIWRSNFDDTEANVMTEMRLYKEFKILANMSNALLKQQFGPNTPTIEKLRNKVQLLLLNLHPIFDNNRPVPPSVQYLGGGIHLVKSAPLTKLSPVINAQMNKSKSGTIYVSFGSSIDTKSFANEFLYMLINTFKTLDNYTILWKIDDEVVKNITLPANVITQNWFNQRAVLRHKKMAAFITQGGLQSSDEALEAGIPMVCLPMMGDQFYHAHKLQQLGVARALDTVTVSSDQLLVAINDVLFNAPTYKKHMAELYALINHDKATFPPLDKAIKFTERVIRYRHDISRQLYSLKTTAANVPYSNYYMYKSVFSIVMNHLTHF.

A signal peptide spans 1–18 (MTILCWLALLSTLTAVNA).

This sequence belongs to the UDP-glycosyltransferase family. In terms of processing, glycosylated.

Catalyzes the transfer of glucose from UDP-glucose to ecdysteroids which are insect molting hormones. Acts on the host at the organismal level to block its development, thereby increasing the yield of progeny virus. The polypeptide is Ecdysteroid UDP-glucosyltransferase (EGT) (Lepidoptera (butterflies and moths)).